The sequence spans 166 residues: uncharacterized protein (166 aa).

The GIY-YIG domain maps to 2 to 82 (DNWVCYLIMS…KRLSKKRNIQ (81 aa)). The segment at 23–43 (NNRQRRLNDHNNLNPSRKGAK) is disordered.

This is an uncharacterized protein from Acanthamoeba polyphaga mimivirus (APMV).